Reading from the N-terminus, the 218-residue chain is MKFFIDTANLAQIKEAQALGVLDGVTTNPSLMAKEGITGKNNILKHYVDICNIVEGDVSAEVNAMDYDGMIREGEELAELHDQIVVKLPMTKEGIMACKYFSDRGIRTNVTLIFSAGQALLAAKAGATYCSPFIGRLDDISTDGLNLIQEIRDIYDNYGFETQILAASVRHTMHVVNCAKIGADVMTGPLSSILGLLKHPLTDIGIAQFIADFEKGNR.

Residue K87 is the Schiff-base intermediate with substrate of the active site.

It belongs to the transaldolase family. Type 3B subfamily.

It is found in the cytoplasm. The catalysed reaction is D-sedoheptulose 7-phosphate + D-glyceraldehyde 3-phosphate = D-erythrose 4-phosphate + beta-D-fructose 6-phosphate. Its pathway is carbohydrate degradation; pentose phosphate pathway; D-glyceraldehyde 3-phosphate and beta-D-fructose 6-phosphate from D-ribose 5-phosphate and D-xylulose 5-phosphate (non-oxidative stage): step 2/3. In terms of biological role, transaldolase is important for the balance of metabolites in the pentose-phosphate pathway. This Flavobacterium psychrophilum (strain ATCC 49511 / DSM 21280 / CIP 103535 / JIP02/86) protein is Probable transaldolase.